The sequence spans 362 residues: Chorismate synthase (362 aa).

Residues R48 and R54 each coordinate NADP(+). FMN contacts are provided by residues 131–133 (RSS), 243–244 (NA), G287, 302–306 (KPTSS), and R328.

The protein belongs to the chorismate synthase family. As to quaternary structure, homotetramer. FMNH2 is required as a cofactor.

The enzyme catalyses 5-O-(1-carboxyvinyl)-3-phosphoshikimate = chorismate + phosphate. Its pathway is metabolic intermediate biosynthesis; chorismate biosynthesis; chorismate from D-erythrose 4-phosphate and phosphoenolpyruvate: step 7/7. Catalyzes the anti-1,4-elimination of the C-3 phosphate and the C-6 proR hydrogen from 5-enolpyruvylshikimate-3-phosphate (EPSP) to yield chorismate, which is the branch point compound that serves as the starting substrate for the three terminal pathways of aromatic amino acid biosynthesis. This reaction introduces a second double bond into the aromatic ring system. The protein is Chorismate synthase of Rhodopseudomonas palustris (strain TIE-1).